We begin with the raw amino-acid sequence, 163 residues long: uncharacterized protein (163 aa).

Residues 23 to 113 (DFPEEPPLWV…QVADGVHSQQ (91 aa)) are disordered. Residue S102 is modified to Phosphoserine.

This is an uncharacterized protein from Mus musculus (Mouse).